Here is a 299-residue protein sequence, read N- to C-terminus: Probable lipid kinase YegS (299 aa).

The DAGKc domain occupies 2–133 (AEFPASLLIL…IDMAQVNKQT (132 aa)). ATP is bound by residues threonine 40, 66–72 (GDGTINE), and threonine 95. The Mg(2+) site is built by leucine 215, aspartate 218, and leucine 220. The active-site Proton acceptor is glutamate 271.

The protein belongs to the diacylglycerol/lipid kinase family. YegS lipid kinase subfamily. Mg(2+) is required as a cofactor. The cofactor is Ca(2+).

It is found in the cytoplasm. Functionally, probably phosphorylates lipids; the in vivo substrate is unknown. The sequence is that of Probable lipid kinase YegS from Shigella flexneri.